A 155-amino-acid polypeptide reads, in one-letter code: Endoribonuclease YbeY (155 aa).

Zn(2+) contacts are provided by H113, H117, and H123.

Belongs to the endoribonuclease YbeY family. Zn(2+) serves as cofactor.

It is found in the cytoplasm. Single strand-specific metallo-endoribonuclease involved in late-stage 70S ribosome quality control and in maturation of the 3' terminus of the 16S rRNA. The protein is Endoribonuclease YbeY of Ureaplasma parvum serovar 3 (strain ATCC 27815 / 27 / NCTC 11736).